A 413-amino-acid polypeptide reads, in one-letter code: Large ribosomal subunit protein uL4 (413 aa).

Ala2 carries the post-translational modification N-acetylalanine. Residue Lys14 is modified to N6-acetyllysine. Arg97 carries the omega-N-methylarginine modification. Lys106 is subject to N6-acetyllysine. Lys239 participates in a covalent cross-link: Glycyl lysine isopeptide (Lys-Gly) (interchain with G-Cter in SUMO2). Lys259 is modified (N6-acetyllysine). Thr266 is subject to Phosphothreonine. Phosphoserine is present on residues Ser290 and Ser295. Arg300 carries the citrulline modification. Residue Lys327 forms a Glycyl lysine isopeptide (Lys-Gly) (interchain with G-Cter in SUMO2) linkage. Lys333 bears the N6-acetyllysine mark. A disordered region spans residues 355-413; sequence AAALAAKSDPKEAPAKKKPVVGKKKKPVVGRKAAAAKKPAADKKAADKRAGPEDKKPAA. At Lys361 the chain carries N6-acetyllysine; alternate. A Glycyl lysine isopeptide (Lys-Gly) (interchain with G-Cter in SUMO1); alternate cross-link involves residue Lys361. The residue at position 362 (Ser362) is a Phosphoserine. Residues 370–383 are compositionally biased toward basic residues; the sequence is KKKPVVGKKKKPVV. Basic and acidic residues predominate over residues 393–413; it reads PAADKKAADKRAGPEDKKPAA.

It belongs to the universal ribosomal protein uL4 family. In terms of assembly, component of the large ribosomal subunit. May bind IPO9 with low affinity. Interacts with RBM3. Post-translationally, citrullinated by PADI4.

Its subcellular location is the cytoplasm. Its function is as follows. Component of the large ribosomal subunit. The ribosome is a large ribonucleoprotein complex responsible for the synthesis of proteins in the cell. This is Large ribosomal subunit protein uL4 (RPL4) from Oryctolagus cuniculus (Rabbit).